The sequence spans 355 residues: Beta-porphyranase C (355 aa).

A signal peptide spans 1–18 (MIKTLKRIPLVFLIAIMA). The N-palmitoyl cysteine moiety is linked to residue Cys-19. Cys-19 carries the S-diacylglycerol cysteine lipid modification. The interval 22–72 (SGDNGKDKVEEQEQAQEQGEKKGQGEERDKEDGIDGLQPTFLADQDPKPDD) is disordered. Over residues 39 to 54 (QGEKKGQGEERDKEDG) the composition is skewed to basic and acidic residues. Residues 71-355 (DDKKWIKVEG…WVRVWQLEDL (285 aa)) enclose the GH16 domain. Residues Trp-110, Glu-208, and Glu-213 each contribute to the substrate site. Glu-208 acts as the Nucleophile in catalysis. Glu-213 acts as the Proton donor in catalysis.

The protein belongs to the glycosyl hydrolase 16 family.

Its subcellular location is the cell outer membrane. It carries out the reaction Hydrolysis of beta-D-galactopyranose-(1-&gt;4)-alpha-L-galactopyranose-6-sulfate linkages in porphyran.. In terms of biological role, cleaves the sulfated polysaccharide porphyran at the (1-&gt;4) linkages between beta-D-galactopyranose and alpha-L-galactopyranose-6-sulfate, forming mostly the disaccharide alpha-L-galactopyranose-6-sulfate-(1-&gt;3)-beta-D-galactose. The polypeptide is Beta-porphyranase C (porC) (Zobellia galactanivorans (strain DSM 12802 / CCUG 47099 / CIP 106680 / NCIMB 13871 / Dsij)).